The chain runs to 490 residues: Bifunctional protein HldE (490 aa).

A ribokinase region spans residues 1 to 330 (MFSFDALLQA…RRILPHASLA (330 aa)). 205 to 208 (NRKE) contacts ATP. The active site involves aspartate 275. The interval 358 to 490 (FTNGCFDILH…LVARAREGQS (133 aa)) is cytidylyltransferase.

The protein in the N-terminal section; belongs to the carbohydrate kinase PfkB family. This sequence in the C-terminal section; belongs to the cytidylyltransferase family. Homodimer.

The enzyme catalyses D-glycero-beta-D-manno-heptose 7-phosphate + ATP = D-glycero-beta-D-manno-heptose 1,7-bisphosphate + ADP + H(+). It carries out the reaction D-glycero-beta-D-manno-heptose 1-phosphate + ATP + H(+) = ADP-D-glycero-beta-D-manno-heptose + diphosphate. It functions in the pathway nucleotide-sugar biosynthesis; ADP-L-glycero-beta-D-manno-heptose biosynthesis; ADP-L-glycero-beta-D-manno-heptose from D-glycero-beta-D-manno-heptose 7-phosphate: step 1/4. Its pathway is nucleotide-sugar biosynthesis; ADP-L-glycero-beta-D-manno-heptose biosynthesis; ADP-L-glycero-beta-D-manno-heptose from D-glycero-beta-D-manno-heptose 7-phosphate: step 3/4. Functionally, catalyzes the phosphorylation of D-glycero-D-manno-heptose 7-phosphate at the C-1 position to selectively form D-glycero-beta-D-manno-heptose-1,7-bisphosphate. Its function is as follows. Catalyzes the ADP transfer from ATP to D-glycero-beta-D-manno-heptose 1-phosphate, yielding ADP-D-glycero-beta-D-manno-heptose. The chain is Bifunctional protein HldE from Rhodopseudomonas palustris (strain ATCC BAA-98 / CGA009).